Here is a 226-residue protein sequence, read N- to C-terminus: ATP synthase F(0) complex subunit a (226 aa).

The next 6 membrane-spanning stretches (helical) occupy residues 6 to 26 (FASF…IVLF), 68 to 88 (WTLM…LGLL), 97 to 117 (QLSM…ITGF), 138 to 158 (IPML…ALAV), 164 to 184 (ITAG…LMSI), and 200 to 222 (TILE…SLYL).

Belongs to the ATPase A chain family. In terms of assembly, component of the ATP synthase complex composed at least of ATP5F1A/subunit alpha, ATP5F1B/subunit beta, ATP5MC1/subunit c (homooctomer), MT-ATP6/subunit a, MT-ATP8/subunit 8, ATP5ME/subunit e, ATP5MF/subunit f, ATP5MG/subunit g, ATP5MK/subunit k, ATP5MJ/subunit j, ATP5F1C/subunit gamma, ATP5F1D/subunit delta, ATP5F1E/subunit epsilon, ATP5PF/subunit F6, ATP5PB/subunit b, ATP5PD/subunit d, ATP5PO/subunit OSCP. ATP synthase complex consists of a soluble F(1) head domain (subunits alpha(3) and beta(3)) - the catalytic core - and a membrane F(0) domain - the membrane proton channel (subunits c, a, 8, e, f, g, k and j). These two domains are linked by a central stalk (subunits gamma, delta, and epsilon) rotating inside the F1 region and a stationary peripheral stalk (subunits F6, b, d, and OSCP). Interacts with DNAJC30; interaction is direct.

Its subcellular location is the mitochondrion inner membrane. The catalysed reaction is H(+)(in) = H(+)(out). Functionally, subunit a, of the mitochondrial membrane ATP synthase complex (F(1)F(0) ATP synthase or Complex V) that produces ATP from ADP in the presence of a proton gradient across the membrane which is generated by electron transport complexes of the respiratory chain. ATP synthase complex consist of a soluble F(1) head domain - the catalytic core - and a membrane F(1) domain - the membrane proton channel. These two domains are linked by a central stalk rotating inside the F(1) region and a stationary peripheral stalk. During catalysis, ATP synthesis in the catalytic domain of F(1) is coupled via a rotary mechanism of the central stalk subunits to proton translocation. With the subunit c (ATP5MC1), forms the proton-conducting channel in the F(0) domain, that contains two crucial half-channels (inlet and outlet) that facilitate proton movement from the mitochondrial intermembrane space (IMS) into the matrix. Protons are taken up via the inlet half-channel and released through the outlet half-channel, following a Grotthuss mechanism. In Bos mutus grunniens (Wild yak), this protein is ATP synthase F(0) complex subunit a.